A 434-amino-acid chain; its full sequence is Asparagine--tRNA ligase (434 aa).

Belongs to the class-II aminoacyl-tRNA synthetase family.

The protein localises to the cytoplasm. The catalysed reaction is tRNA(Asn) + L-asparagine + ATP = L-asparaginyl-tRNA(Asn) + AMP + diphosphate + H(+). The chain is Asparagine--tRNA ligase (asnS) from Pyrococcus furiosus (strain ATCC 43587 / DSM 3638 / JCM 8422 / Vc1).